Here is a 387-residue protein sequence, read N- to C-terminus: MADQKDYYETLGVSRDADDDTIRKAFRKLSKKYHPDLNHAPGAEQKFKDINEAYQVLSDPQKRAAYDQYGSADGPQGFGGAGAGQGGFSDFGGGQGGFGGFDDIFSQFFGGAGGGAQANPSAPRQGADLQYRMDLTFEEAIFGKDTKISYDREAVCHTCNGSGAKPGTSPVTCHKCHGSGYIQVQRNTAFGAMMTRQVCDVCGGTGKEIKEKCPTCHGTGHEQERHTIDVKVPAGVEDGQQMRLQQAGEAGTNGGPYGDLYIVFRVAPSKKYQRDGSEIYLTIPLSFAQAALGDEIKVDTVHGAVELKIPAGTQSQTKFRLRGKGAPRLRGNGTGDQIVTVEVQTPKHLNEKQKSALMQFAAASGEDVTPHNGTLFDRVKEAFKGGK.

The region spanning 6-70 is the J domain; the sequence is DYYETLGVSR…QKRAAYDQYG (65 aa). The CR-type zinc finger occupies 143-225; it reads GKDTKISYDR…CHGTGHEQER (83 aa). Residues Cys-156, Cys-159, Cys-173, Cys-176, Cys-199, Cys-202, Cys-213, and Cys-216 each coordinate Zn(2+). CXXCXGXG motif repeat units lie at residues 156 to 163, 173 to 180, 199 to 206, and 213 to 220; these read CHTCNGSG, CHKCHGSG, CDVCGGTG, and CPTCHGTG.

The protein belongs to the DnaJ family. In terms of assembly, homodimer. Zn(2+) serves as cofactor.

The protein resides in the cytoplasm. Participates actively in the response to hyperosmotic and heat shock by preventing the aggregation of stress-denatured proteins and by disaggregating proteins, also in an autonomous, DnaK-independent fashion. Unfolded proteins bind initially to DnaJ; upon interaction with the DnaJ-bound protein, DnaK hydrolyzes its bound ATP, resulting in the formation of a stable complex. GrpE releases ADP from DnaK; ATP binding to DnaK triggers the release of the substrate protein, thus completing the reaction cycle. Several rounds of ATP-dependent interactions between DnaJ, DnaK and GrpE are required for fully efficient folding. Also involved, together with DnaK and GrpE, in the DNA replication of plasmids through activation of initiation proteins. This Lacticaseibacillus paracasei (strain ATCC 334 / BCRC 17002 / CCUG 31169 / CIP 107868 / KCTC 3260 / NRRL B-441) (Lactobacillus paracasei) protein is Chaperone protein DnaJ.